We begin with the raw amino-acid sequence, 932 residues long: DNA mismatch repair protein MutS (932 aa).

ATP is bound at residue 620–627; that stretch reads GPNMAGKS.

The protein belongs to the DNA mismatch repair MutS family.

This protein is involved in the repair of mismatches in DNA. It is possible that it carries out the mismatch recognition step. This protein has a weak ATPase activity. This is DNA mismatch repair protein MutS from Lachnoclostridium phytofermentans (strain ATCC 700394 / DSM 18823 / ISDg) (Clostridium phytofermentans).